Here is a 962-residue protein sequence, read N- to C-terminus: Ubiquitin carboxyl-terminal hydrolase 4 (962 aa).

The DUSP domain occupies Pro-11 to Val-122. The necessary for interaction with SART3 stretch occupies residues Thr-27–Glu-216. Residues Val-133–Lys-141 carry the Nuclear export signal motif. The Ubiquitin-like 1 domain occupies Leu-142–Arg-226. The interval Glu-220–Ala-249 is disordered. Positions Pro-225–Ala-249 are enriched in polar residues. The required for USP4 activation by providing conformational flexibility between the DUSP and catalytic domains stretch occupies residues Leu-229 to Pro-295. Positions Cys-302–Arg-922 constitute a USP domain. Cys-311 functions as the Nucleophile in the catalytic mechanism. Residues Pro-384–Phe-386 are regulates ubiquitin dissociation. Residues Leu-405 to Glu-407 are necessary for interaction with RBL2. Ser-445 carries the phosphoserine modification. The necessary for interaction with RB1 and RBL2 stretch occupies residues Leu-459–Glu-463. Zn(2+) is bound by residues Cys-461 and Cys-464. One can recognise a Ubiquitin-like 2 domain in the interval Leu-483 to Ser-571. Residues Lys-485–Ala-774 are interacts with DUSP and ubiquitin-like 1 domains and is required for USP4 activation. Residues Glu-638 to Gln-699 are disordered. The residue at position 655 (Ser-655) is a Phosphoserine. Positions Glu-657–His-666 are enriched in acidic residues. 2 positions are modified to phosphoserine: Ser-675 and Ser-680. A Nuclear localization signal motif is present at residues Gln-766–Lys-771. Zn(2+)-binding residues include Cys-798 and Cys-801. His-880 serves as the catalytic Proton acceptor. Positions Ser-928–Gly-937 are enriched in low complexity. Residues Ser-928 to Asn-962 form a disordered region. Over residues Gly-952 to Asn-962 the composition is skewed to acidic residues.

Belongs to the peptidase C19 family. USP4 subfamily. As to quaternary structure, interacts with RB1 (both dephosphorylated and hypophosphorylated forms). Interacts with RBL1 and RBL2. Interacts with ADORA2A (via cytoplasmic C-terminus); the interaction is direct. Interacts with SART3; recruits USP4 to its substrate PRPF3. Post-translationally, phosphorylated at Ser-445 by PKB/AKT1 in response to EGF stimulus, promoting its ability deubiquitinate RHEB. In terms of processing, monoubiquitinated by TRIM21. Ubiquitination does not lead to its proteasomal degradation. Autodeubiquitinated. Expressed in brain, kidney, liver and spleen (at protein level).

Its subcellular location is the cytoplasm. It localises to the nucleus. The enzyme catalyses Thiol-dependent hydrolysis of ester, thioester, amide, peptide and isopeptide bonds formed by the C-terminal Gly of ubiquitin (a 76-residue protein attached to proteins as an intracellular targeting signal).. Its activity is regulated as follows. The completion of the deubiquitinase reaction is mediated by the DUSP and ubiquitin-like 1 domains which promotes the release of ubiquitin from the catalytic site enabling subsequent reactions to occur. In terms of biological role, deubiquitinating enzyme that removes conjugated ubiquitin from target proteins. Deubiquitinates PDPK1. Deubiquitinates TRIM21. Deubiquitinates receptor ADORA2A which increases the amount of functional receptor at the cell surface. Deubiquitinates HAS2. Deubiquitinates RHEB in response to EGF signaling, promoting mTORC1 signaling. May regulate mRNA splicing through deubiquitination of the U4 spliceosomal protein PRPF3. This may prevent its recognition by the U5 component PRPF8 thereby destabilizing interactions within the U4/U6.U5 snRNP. May also play a role in the regulation of quality control in the ER. This is Ubiquitin carboxyl-terminal hydrolase 4 (Usp4) from Mus musculus (Mouse).